Here is a 319-residue protein sequence, read N- to C-terminus: HPr kinase/phosphorylase (319 aa).

Residues histidine 141 and lysine 162 contribute to the active site. Residue glycine 156–serine 163 participates in ATP binding. Residue serine 163 coordinates Mg(2+). Aspartate 180 (proton acceptor; for phosphorylation activity. Proton donor; for dephosphorylation activity) is an active-site residue. The tract at residues methionine 204–aspartate 213 is important for the catalytic mechanism of both phosphorylation and dephosphorylation. Position 205 (glutamate 205) interacts with Mg(2+). Arginine 246 is a catalytic residue. Residues proline 267 to arginine 272 are important for the catalytic mechanism of dephosphorylation.

The protein belongs to the HPrK/P family. As to quaternary structure, homohexamer. Requires Mg(2+) as cofactor.

It carries out the reaction [HPr protein]-L-serine + ATP = [HPr protein]-O-phospho-L-serine + ADP + H(+). The catalysed reaction is [HPr protein]-O-phospho-L-serine + phosphate + H(+) = [HPr protein]-L-serine + diphosphate. Its function is as follows. Catalyzes the ATP- as well as the pyrophosphate-dependent phosphorylation of a specific serine residue in HPr, a phosphocarrier protein of the phosphoenolpyruvate-dependent sugar phosphotransferase system (PTS). HprK/P also catalyzes the pyrophosphate-producing, inorganic phosphate-dependent dephosphorylation (phosphorolysis) of seryl-phosphorylated HPr (P-Ser-HPr). The two antagonistic activities of HprK/P are regulated by several intracellular metabolites, which change their concentration in response to the absence or presence of rapidly metabolisable carbon sources (glucose, fructose, etc.) in the growth medium. Therefore, by controlling the phosphorylation state of HPr, HPrK/P is a sensor enzyme that plays a major role in the regulation of carbon metabolism and sugar transport: it mediates carbon catabolite repression (CCR), and regulates PTS-catalyzed carbohydrate uptake and inducer exclusion. The chain is HPr kinase/phosphorylase from Lactobacillus gasseri (strain ATCC 33323 / DSM 20243 / BCRC 14619 / CIP 102991 / JCM 1131 / KCTC 3163 / NCIMB 11718 / NCTC 13722 / AM63).